The following is a 126-amino-acid chain: MAIVGLGTDIAEIERVEKALSRSGDAFAERILSQSEFEIYQELKQKGRFLAKRFAAKEAASKALGTGIAHGVTFHDFTISNDENGKPMLTLSGKALELSQKSHIANIHLTISDERHYAVATVIFES.

Mg(2+)-binding residues include D9 and E58.

It belongs to the P-Pant transferase superfamily. AcpS family. The cofactor is Mg(2+).

The protein resides in the cytoplasm. The enzyme catalyses apo-[ACP] + CoA = holo-[ACP] + adenosine 3',5'-bisphosphate + H(+). Functionally, transfers the 4'-phosphopantetheine moiety from coenzyme A to a Ser of acyl-carrier-protein. In Aliivibrio fischeri (strain MJ11) (Vibrio fischeri), this protein is Holo-[acyl-carrier-protein] synthase.